A 384-amino-acid polypeptide reads, in one-letter code: Succinyl-diaminopimelate desuccinylase (384 aa).

Position 71 (histidine 71) interacts with Zn(2+). Aspartate 73 is a catalytic residue. Aspartate 104 serves as a coordination point for Zn(2+). The active-site Proton acceptor is glutamate 138. Glutamate 139, glutamate 167, and histidine 357 together coordinate Zn(2+).

It belongs to the peptidase M20A family. DapE subfamily. Homodimer. The cofactor is Zn(2+). Requires Co(2+) as cofactor.

It carries out the reaction N-succinyl-(2S,6S)-2,6-diaminopimelate + H2O = (2S,6S)-2,6-diaminopimelate + succinate. The protein operates within amino-acid biosynthesis; L-lysine biosynthesis via DAP pathway; LL-2,6-diaminopimelate from (S)-tetrahydrodipicolinate (succinylase route): step 3/3. In terms of biological role, catalyzes the hydrolysis of N-succinyl-L,L-diaminopimelic acid (SDAP), forming succinate and LL-2,6-diaminopimelate (DAP), an intermediate involved in the bacterial biosynthesis of lysine and meso-diaminopimelic acid, an essential component of bacterial cell walls. The polypeptide is Succinyl-diaminopimelate desuccinylase (Blochmanniella floridana).